Consider the following 320-residue polypeptide: Lipoyl synthase (320 aa).

Residues Cys66, Cys71, Cys77, Cys92, Cys96, Cys99, and Ser306 each coordinate [4Fe-4S] cluster. The Radical SAM core domain occupies 77 to 295 (CFGHGTATFM…AEIGYAMGFS (219 aa)).

It belongs to the radical SAM superfamily. Lipoyl synthase family. Requires [4Fe-4S] cluster as cofactor.

It localises to the cytoplasm. It carries out the reaction [[Fe-S] cluster scaffold protein carrying a second [4Fe-4S](2+) cluster] + N(6)-octanoyl-L-lysyl-[protein] + 2 oxidized [2Fe-2S]-[ferredoxin] + 2 S-adenosyl-L-methionine + 4 H(+) = [[Fe-S] cluster scaffold protein] + N(6)-[(R)-dihydrolipoyl]-L-lysyl-[protein] + 4 Fe(3+) + 2 hydrogen sulfide + 2 5'-deoxyadenosine + 2 L-methionine + 2 reduced [2Fe-2S]-[ferredoxin]. It participates in protein modification; protein lipoylation via endogenous pathway; protein N(6)-(lipoyl)lysine from octanoyl-[acyl-carrier-protein]: step 2/2. In terms of biological role, catalyzes the radical-mediated insertion of two sulfur atoms into the C-6 and C-8 positions of the octanoyl moiety bound to the lipoyl domains of lipoate-dependent enzymes, thereby converting the octanoylated domains into lipoylated derivatives. The chain is Lipoyl synthase from Thioalkalivibrio sulfidiphilus (strain HL-EbGR7).